The sequence spans 86 residues: MKILIIFVIAITVVGVQSKDGYPIYSTGKSKGCKIECVINNKYCDKECTLKGGSSGYCYFWKLACYCEGLPDSVAVWTYAENTCGR.

The signal sequence occupies residues 1 to 18 (MKILIIFVIAITVVGVQS). The LCN-type CS-alpha/beta domain maps to 19–85 (KDGYPIYSTG…VWTYAENTCG (67 aa)). 4 disulfides stabilise this stretch: Cys-33/Cys-84, Cys-37/Cys-58, Cys-44/Cys-65, and Cys-48/Cys-67. Cys-84 is subject to Cysteine amide.

The protein belongs to the long (4 C-C) scorpion toxin superfamily. Sodium channel inhibitor family. Beta subfamily. Expressed by the venom gland.

It localises to the secreted. Its function is as follows. Binds voltage-independently at site-4 of sodium channels (Nav) and shift the voltage of activation toward more negative potentials thereby affecting sodium channel activation and promoting spontaneous and repetitive firing. The chain is Neurotoxin LmNaTx1 from Lychas mucronatus (Chinese swimming scorpion).